Here is a 129-residue protein sequence, read N- to C-terminus: Small ribosomal subunit protein uS9 (129 aa).

It belongs to the universal ribosomal protein uS9 family.

The polypeptide is Small ribosomal subunit protein uS9 (Chlorobium phaeovibrioides (strain DSM 265 / 1930) (Prosthecochloris vibrioformis (strain DSM 265))).